A 397-amino-acid polypeptide reads, in one-letter code: Tyrosine--tRNA ligase (397 aa).

The short motif at Pro-39–His-48 is the 'HIGH' region element. The 'KMSKS' region signature appears at Lys-223–Ser-227. Lys-226 contributes to the ATP binding site. Positions Tyr-334–Leu-395 constitute an S4 RNA-binding domain.

The protein belongs to the class-I aminoacyl-tRNA synthetase family. TyrS type 2 subfamily. Homodimer.

It localises to the cytoplasm. The catalysed reaction is tRNA(Tyr) + L-tyrosine + ATP = L-tyrosyl-tRNA(Tyr) + AMP + diphosphate + H(+). In terms of biological role, catalyzes the attachment of tyrosine to tRNA(Tyr) in a two-step reaction: tyrosine is first activated by ATP to form Tyr-AMP and then transferred to the acceptor end of tRNA(Tyr). The sequence is that of Tyrosine--tRNA ligase from Methylococcus capsulatus (strain ATCC 33009 / NCIMB 11132 / Bath).